The sequence spans 122 residues: Small ribosomal subunit protein uS13 (122 aa).

The interval 93 to 122 (RRGLPVRGQRTKTNARTRKGPKKTVAGKKK) is disordered.

This sequence belongs to the universal ribosomal protein uS13 family. As to quaternary structure, part of the 30S ribosomal subunit. Forms a loose heterodimer with protein S19. Forms two bridges to the 50S subunit in the 70S ribosome.

In terms of biological role, located at the top of the head of the 30S subunit, it contacts several helices of the 16S rRNA. In the 70S ribosome it contacts the 23S rRNA (bridge B1a) and protein L5 of the 50S subunit (bridge B1b), connecting the 2 subunits; these bridges are implicated in subunit movement. Contacts the tRNAs in the A and P-sites. This is Small ribosomal subunit protein uS13 from Micrococcus luteus (strain ATCC 4698 / DSM 20030 / JCM 1464 / CCM 169 / CCUG 5858 / IAM 1056 / NBRC 3333 / NCIMB 9278 / NCTC 2665 / VKM Ac-2230) (Micrococcus lysodeikticus).